Consider the following 178-residue polypeptide: Bifunctional protein PyrR (178 aa).

The PRPP-binding motif lies at valine 99 to threonine 111.

The protein belongs to the purine/pyrimidine phosphoribosyltransferase family. PyrR subfamily. As to quaternary structure, homodimer and homohexamer; in equilibrium.

The enzyme catalyses UMP + diphosphate = 5-phospho-alpha-D-ribose 1-diphosphate + uracil. Regulates transcriptional attenuation of the pyrimidine nucleotide (pyr) operon by binding in a uridine-dependent manner to specific sites on pyr mRNA. This disrupts an antiterminator hairpin in the RNA and favors formation of a downstream transcription terminator, leading to a reduced expression of downstream genes. Functionally, also displays a weak uracil phosphoribosyltransferase activity which is not physiologically significant. The protein is Bifunctional protein PyrR of Clostridium perfringens (strain ATCC 13124 / DSM 756 / JCM 1290 / NCIMB 6125 / NCTC 8237 / Type A).